The primary structure comprises 353 residues: Nuclear hormone receptor family member nhr-27 (353 aa).

Residues 24 to 102 (VSNCVVCGRL…KGMLDLSRYT (79 aa)) constitute a DNA-binding region (nuclear receptor). NR C4-type zinc fingers lie at residues 27 to 47 (CVVCGRLTSLFNYGAHSCSAC) and 64 to 85 (CKYSGNCFENFKRAIHFECKFC). The 233-residue stretch at 119 to 351 (ETLFLTMTVS…SQVHQDVIEF (233 aa)) folds into the NR LBD domain. Residues 340 to 351 (QPSQVHQDVIEF) form an AF-2 region.

It belongs to the nuclear hormone receptor family.

Its subcellular location is the nucleus. Functionally, ligand-activated transcription factor. Involved in lifespan extension in a manner dependent upon mitochondrial function. This Caenorhabditis elegans protein is Nuclear hormone receptor family member nhr-27.